A 447-amino-acid chain; its full sequence is MTGQPYLDLPRARQARGQVALPGSKSISNRVLLLAALAAGRTDISGLLDSDDTRVMLAALRQLGVELAEAGEGRVTVGGAGRFPVKQADLFLGNAGTAFRPLTAALALMGGQYRLSGVPRMHERPIGDLVDALRQWGARIDYLGQAGYPPLAVGEGRIRADAPARVQGAVSSQFLTALLLAAPVLAQGSDRPVVIEVAGELISKPYIEITLNLMARYGVQVRRDGWRTFTIEPGAAYRSPGAIAVEGDASSASYFLALGAIGGGPVRVTGVGADSIQGDVAFARTLADMGVQIDYGPDWIEARGVRVDQGGRLKAFDTDFNLIPDAAMTAAALALYADGPCRLRNIGSWRVKETDRIHAMHTELAKLGAEVESGPDWLRITPPADGGWRDAHIGTWDDHRMAMCFSLAAFGPAAVRILDPGCVSKTFPDYFDVYAGLVSGAPDSYDD.

3-phosphoshikimate is bound by residues Lys-25, Ser-26, and Arg-30. Lys-25 lines the phosphoenolpyruvate pocket. Residues Gly-96 and Arg-124 each contribute to the phosphoenolpyruvate site. Residues Ser-171, Ser-172, Gln-173, Ser-203, Asp-325, and Lys-352 each contribute to the 3-phosphoshikimate site. Gln-173 provides a ligand contact to phosphoenolpyruvate. The active-site Proton acceptor is Asp-325. 3 residues coordinate phosphoenolpyruvate: Arg-356, Arg-400, and Lys-425.

The protein belongs to the EPSP synthase family. Monomer.

It is found in the cytoplasm. The catalysed reaction is 3-phosphoshikimate + phosphoenolpyruvate = 5-O-(1-carboxyvinyl)-3-phosphoshikimate + phosphate. It participates in metabolic intermediate biosynthesis; chorismate biosynthesis; chorismate from D-erythrose 4-phosphate and phosphoenolpyruvate: step 6/7. Functionally, catalyzes the transfer of the enolpyruvyl moiety of phosphoenolpyruvate (PEP) to the 5-hydroxyl of shikimate-3-phosphate (S3P) to produce enolpyruvyl shikimate-3-phosphate and inorganic phosphate. The protein is 3-phosphoshikimate 1-carboxyvinyltransferase of Bordetella petrii (strain ATCC BAA-461 / DSM 12804 / CCUG 43448).